A 577-amino-acid polypeptide reads, in one-letter code: Sulfite reductase [NADPH] hemoprotein beta-component (577 aa).

Residues cysteine 440, cysteine 446, cysteine 486, and cysteine 490 each coordinate [4Fe-4S] cluster. Cysteine 490 serves as a coordination point for siroheme.

The protein belongs to the nitrite and sulfite reductase 4Fe-4S domain family. In terms of assembly, alpha(8)-beta(8). The alpha component is a flavoprotein, the beta component is a hemoprotein. It depends on siroheme as a cofactor. [4Fe-4S] cluster serves as cofactor.

It carries out the reaction hydrogen sulfide + 3 NADP(+) + 3 H2O = sulfite + 3 NADPH + 4 H(+). It functions in the pathway sulfur metabolism; hydrogen sulfide biosynthesis; hydrogen sulfide from sulfite (NADPH route): step 1/1. In terms of biological role, component of the sulfite reductase complex that catalyzes the 6-electron reduction of sulfite to sulfide. This is one of several activities required for the biosynthesis of L-cysteine from sulfate. This Vibrio cholerae serotype O1 (strain ATCC 39541 / Classical Ogawa 395 / O395) protein is Sulfite reductase [NADPH] hemoprotein beta-component.